The chain runs to 316 residues: Apolipoprotein E (316 aa).

The N-terminal stretch at 1-18 (MKVLWVALVITLLAGCQA) is a signal peptide. Tandem repeats lie at residues 79-100 (VLMDETMKEVKAYREELEGQLG), 101-122 (PIAQETQARVSKELQAAQARLA), 123-144 (SDMEDVRSRVAQYRSEVQAMMG), 145-166 (QTTDELRGRLASHLRKLRKRLL), 167-188 (RDAEDLQKRLAVYRAGALEGSE), 189-210 (RSVSAIRERLGPLVEQGRVRAA), 211-232 (TVGTLASQTLRERAEAWHQKLR), and 233-254 (GRMEEMGTQARDHLEEMREQLE). The 8 X 22 AA approximate tandem repeats stretch occupies residues 79–254 (VLMDETMKEV…HLEEMREQLE (176 aa)). Methionine 142 is modified (methionine sulfoxide). The segment at 157–167 (HLRKLRKRLLR) is LDL and other lipoprotein receptors binding. Position 161–164 (161–164 (LRKR)) interacts with heparin. The tract at residues 209–289 (AATVGTLASQ…SWFEPLVEDM (81 aa)) is lipid-binding and lipoprotein association. 228-235 (HQKLRGRM) serves as a coordination point for heparin. The tract at residues 265 to 316 (SQMRLQAEAFQARLKSWFEPLVEDMQRQWAGLVEKVQLAMATSPTSAPIENS) is homooligomerization. The specificity for association with VLDL stretch occupies residues 277-289 (RLKSWFEPLVEDM).

The protein belongs to the apolipoprotein A1/A4/E family. In terms of assembly, homotetramer. May interact with ABCA1; functionally associated with ABCA1 in the biogenesis of HDLs. May interact with APP/A4 amyloid-beta peptide; the interaction is extremely stable in vitro but its physiological significance is unclear. May interact with MAPT. May interact with MAP2. In the cerebrospinal fluid, interacts with secreted SORL1. Interacts with PMEL; this allows the loading of PMEL luminal fragment on ILVs to induce fibril nucleation. In terms of processing, APOE exists as multiple glycosylated and sialylated glycoforms within cells and in plasma. The extent of glycosylation and sialylation are tissue and context specific. Glycated in plasma VLDL. Post-translationally, phosphorylated by FAM20C in the extracellular medium.

It localises to the secreted. The protein localises to the extracellular space. It is found in the extracellular matrix. Its subcellular location is the extracellular vesicle. The protein resides in the endosome. It localises to the multivesicular body. APOE is an apolipoprotein, a protein associating with lipid particles, that mainly functions in lipoprotein-mediated lipid transport between organs via the plasma and interstitial fluids. APOE is a core component of plasma lipoproteins and is involved in their production, conversion and clearance. Apolipoproteins are amphipathic molecules that interact both with lipids of the lipoprotein particle core and the aqueous environment of the plasma. As such, APOE associates with chylomicrons, chylomicron remnants, very low density lipoproteins (VLDL) and intermediate density lipoproteins (IDL) but shows a preferential binding to high-density lipoproteins (HDL). It also binds a wide range of cellular receptors including the LDL receptor/LDLR and the very low-density lipoprotein receptor/VLDLR that mediate the cellular uptake of the APOE-containing lipoprotein particles. Finally, APOE also has a heparin-binding activity and binds heparan-sulfate proteoglycans on the surface of cells, a property that supports the capture and the receptor-mediated uptake of APOE-containing lipoproteins by cells. The chain is Apolipoprotein E (APOE) from Orcinus orca (Killer whale).